A 73-amino-acid polypeptide reads, in one-letter code: Large ribosomal subunit protein uL29 (73 aa).

Belongs to the universal ribosomal protein uL29 family.

The sequence is that of Large ribosomal subunit protein uL29 (rpmC) from Synechocystis sp. (strain ATCC 27184 / PCC 6803 / Kazusa).